A 1756-amino-acid chain; its full sequence is MESQQLSNYPHISHGSACASVTSKEVHTNQDPLDVSASKIQEYDKASTKANSQQTTTPASSAVPENPHHASPQPASVPPPQNGPYPQQCMMTQNQANPSGWSFYGHPSMIPYTPYQMSPMYFPPGPQSQFPQYPSSVGTPLSTPSPESGNTFTDSSSADSDMTSTKKYVRPPPMLTSPNDFPNWVKTYIKFLQNSNLGGIIPTVNGKPVRPITDDELTFLYNAFQIFAPSQFLPTWVKDILSVDYTDIMKILSKSIEKMQSDTQEANDIVTLANLQYNGSTPADAFETKVTNIIDRLNNNGIHINNKVACQLIMRGLSGEYKFLRYTRHRHLNMTVAELFLDIHAIYEEQQGSRNSKPNYRRNPSDEKNDSRSYTNTTKPKVIARNPQKTNNSKSKTARAHNVSTSNNSPSTDNDSISKSTTEPIQLNNKHDLHLGQKLTESTVNHTNHSDDELPGHLLLDSGASRTLIRSAHHIHSASSNPDINVVDAQKRNIPINAIGDLQFHFQDNTKTSLKVLHTPNIAYDLLSLNELAAVDITACFTKNVLERSDGTVLAPIVKYGDFYWVSKKYLLPSNISVPTINNVHTSESTRKYPYPFIHRMLAHANAQTIRYSLKNNTITYFNESDVDWSSAIDYQCPDCLIGKSTKHRHIKGSRLKYQNSYEPFQYLHTDIFGPVHNLPKSAPSYFISFTDETTKFRWVYPLHDRREDSILDVFTTILAFIKNQFQASVLVIQMDRGSEYTNRTLHKFLEKNGITPCYTTTADSRAHGVAERLNRTLLDDCRTQLQCSGLPNHLWFSAIEFSTIVRNSLASPKSKKSARQHAGLAGLDISTLLPFGQPVIVNDHNPNSKIHPRGIPGYALHPSRNSYGYIIYLPSLKKTVDTTNYVILQGKDSRLDQFNYDALTFDEDLNRLTASYQSFIASNEIQQSNDLNIESDHDFQSDIELYPEQPRNVLSKAVSPTDSTPPSTHTEDSKRVSKTNIRAPREVDPNISESNILPSKKRSSTPQISDIESTDSGGMHRLDVPLLAPMSQSNTHESSYASKSKDFRHSDSYSDNETNHTNVPISSTGGTNNKTVPQTSEQETEKRIIHRFTSDRILPSSESNSLHHVVPIKTSDTCFKENTEESIIADLPLPDLPPEPPTELSDSFKELPPINSRQTNSSLGGIGDSNAYTTINSKKRSLEDNETEIKVSRDTWNTKNMRSLEPPRSKKRIHLIAAVKAVKSIKPIRTTLRYDEAITYNKDIKEKEKYIEAYHKEVNQLLKMKTWDTDKYYDRKEIDPKRVINSMFIFNRKRDGTHKARFVARGDIQHPDTYDSGMQSNTVHHYALMTSLSLALDNNYYITQLDISSAYLYADIKEELYIRPPPHLGMNDKLIRLKKSLYGLKQSGANWYETIKSYLIKQCGMEEVRGWSCVFKNSQVTICLFVDDMILFSKDLNSNKRIIAKLKMQYDTKIINLGESDDEIQHDILGLEIKYQRGKYMKLGMENSLTEKIPKLNVPLNPNGRKLGAPGQPGLYINQQELELEEDDYKMKVHEMQKLIGLASYVGYKFRFDLLYYINTLAQHILFPSKQVLDMTYELIQFIWNTRDKQLIWHKSKPVKPTNKLVVISDASYGNQPYYKSQIGNIYLLNGKVIGGKSTKASLTCTSTTEAEIHAISESVPLLNNLSYLIQELDKKPITKGLLTDSKSTISIIISNNEEKFRNRFFGTKAMRLRDEVSGNHLHVCYIETKKNIADVMTKPLPIKTFKLLTNKWIH.

3 stretches are compositionally biased toward polar residues: residues 1–10 (MESQQLSNYP), 48–60 (TKANSQQTTTPAS), and 127–152 (QSQFPQYPSSVGTPLSTPSPESGNTF). Disordered regions lie at residues 1–93 (MESQ…MMTQ), 126–173 (PQSQ…RPPP), and 352–421 (GSRN…SKST). The span at 153-165 (TDSSSADSDMTST) shows a compositional bias: low complexity. An RNA-binding region spans residues 299–401 (NNGIHINNKV…NSKSKTARAH (103 aa)). The span at 402-418 (NVSTSNNSPSTDNDSIS) shows a compositional bias: low complexity. Serine 416 carries the post-translational modification Phosphoserine. Catalysis depends on aspartate 461, which acts as the For protease activity; shared with dimeric partner. Residues 583–640 (NVHTSESTRKYPYPFIHRMLAHANAQTIRYSLKNNTITYFNESDVDWSSAIDYQCPDC) are integrase-type zinc finger-like. The Integrase catalytic domain maps to 660–835 (NSYEPFQYLH…AGLDISTLLP (176 aa)). The Mg(2+) site is built by aspartate 671 and aspartate 736. Disordered stretches follow at residues 956 to 1088 (SKAV…TEKR) and 1142 to 1173 (PTELSDSFKELPPINSRQTNSSLGGIGDSNAY). Residues 960–969 (SPTDSTPPST) are compositionally biased toward low complexity. 2 stretches are compositionally biased toward polar residues: residues 1005 to 1017 (STPQISDIESTDS) and 1031 to 1043 (MSQSNTHESSYAS). Positions 1044 to 1053 (KSKDFRHSDS) are enriched in basic and acidic residues. A compositionally biased stretch (polar residues) spans 1054 to 1082 (YSDNETNHTNVPISSTGGTNNKTVPQTSE). The Bipartite nuclear localization signal motif lies at 1179–1213 (KKRSLEDNETEIKVSRDTWNTKNMRSLEPPRSKKR). The Reverse transcriptase Ty1/copia-type domain occupies 1339-1477 (NNYYITQLDI…DILGLEIKYQ (139 aa)). Aspartate 1347, aspartate 1428, aspartate 1429, aspartate 1611, glutamate 1653, and aspartate 1686 together coordinate Mg(2+). The RNase H Ty1/copia-type domain maps to 1611-1753 (DASYGNQPYY…IKTFKLLTNK (143 aa)).

In terms of assembly, the capsid protein forms a homotrimer, from which the VLPs are assembled. The protease is a homodimer, whose active site consists of two apposed aspartic acid residues. Initially, virus-like particles (VLPs) are composed of the structural unprocessed proteins Gag and Gag-Pol, and also contain the host initiator methionine tRNA (tRNA(i)-Met) which serves as a primer for minus-strand DNA synthesis, and a dimer of genomic Ty RNA. Processing of the polyproteins occurs within the particle and proceeds by an ordered pathway, called maturation. First, the protease (PR) is released by autocatalytic cleavage of the Gag-Pol polyprotein yielding capsid protein p45 and a Pol-p154 precursor protein. This cleavage is a prerequisite for subsequent processing of Pol-p154 at the remaining sites to release the mature structural and catalytic proteins. Maturation takes place prior to the RT reaction and is required to produce transposition-competent VLPs.

The protein localises to the cytoplasm. It localises to the nucleus. The enzyme catalyses DNA(n) + a 2'-deoxyribonucleoside 5'-triphosphate = DNA(n+1) + diphosphate. The catalysed reaction is Endonucleolytic cleavage to 5'-phosphomonoester.. Its function is as follows. Capsid protein (CA) is the structural component of the virus-like particle (VLP), forming the shell that encapsulates the retrotransposons dimeric RNA genome. The particles are assembled from trimer-clustered units and there are holes in the capsid shells that allow for the diffusion of macromolecules. CA also has nucleocapsid-like chaperone activity, promoting primer tRNA(i)-Met annealing to the multipartite primer-binding site (PBS), dimerization of Ty1 RNA and initiation of reverse transcription. Functionally, the aspartyl protease (PR) mediates the proteolytic cleavages of the Gag and Gag-Pol polyproteins after assembly of the VLP. Reverse transcriptase/ribonuclease H (RT) is a multifunctional enzyme that catalyzes the conversion of the retro-elements RNA genome into dsDNA within the VLP. The enzyme displays a DNA polymerase activity that can copy either DNA or RNA templates, and a ribonuclease H (RNase H) activity that cleaves the RNA strand of RNA-DNA heteroduplexes during plus-strand synthesis and hydrolyzes RNA primers. The conversion leads to a linear dsDNA copy of the retrotransposon that includes long terminal repeats (LTRs) at both ends. In terms of biological role, integrase (IN) targets the VLP to the nucleus, where a subparticle preintegration complex (PIC) containing at least integrase and the newly synthesized dsDNA copy of the retrotransposon must transit the nuclear membrane. Once in the nucleus, integrase performs the integration of the dsDNA into the host genome. The sequence is that of Transposon Ty1-BR Gag-Pol polyprotein (TY1B-BR) from Saccharomyces cerevisiae (strain ATCC 204508 / S288c) (Baker's yeast).